A 193-amino-acid polypeptide reads, in one-letter code: Adenine phosphoribosyltransferase (193 aa).

The protein belongs to the purine/pyrimidine phosphoribosyltransferase family. As to quaternary structure, homodimer.

The protein localises to the cytoplasm. It catalyses the reaction AMP + diphosphate = 5-phospho-alpha-D-ribose 1-diphosphate + adenine. The protein operates within purine metabolism; AMP biosynthesis via salvage pathway; AMP from adenine: step 1/1. In terms of biological role, catalyzes a salvage reaction resulting in the formation of AMP, that is energically less costly than de novo synthesis. The polypeptide is Adenine phosphoribosyltransferase (Bifidobacterium animalis subsp. lactis (strain AD011)).